The following is a 359-amino-acid chain: DNA polymerase IV (359 aa).

The UmuC domain maps to 7–188; it reads IIHIDMDAFY…LPIGKFFGVG (182 aa). Aspartate 11 and aspartate 106 together coordinate Mg(2+). Glutamate 107 is a catalytic residue.

The protein belongs to the DNA polymerase type-Y family. As to quaternary structure, monomer. Requires Mg(2+) as cofactor.

Its subcellular location is the cytoplasm. The enzyme catalyses DNA(n) + a 2'-deoxyribonucleoside 5'-triphosphate = DNA(n+1) + diphosphate. Functionally, poorly processive, error-prone DNA polymerase involved in untargeted mutagenesis. Copies undamaged DNA at stalled replication forks, which arise in vivo from mismatched or misaligned primer ends. These misaligned primers can be extended by PolIV. Exhibits no 3'-5' exonuclease (proofreading) activity. May be involved in translesional synthesis, in conjunction with the beta clamp from PolIII. The polypeptide is DNA polymerase IV (Clostridium perfringens (strain 13 / Type A)).